A 176-amino-acid chain; its full sequence is NAD(P)H-quinone oxidoreductase subunit 6, chloroplastic (176 aa).

5 consecutive transmembrane segments (helical) span residues 10-30 (FLLV…VLLP), 32-52 (PIYS…FYIL), 61-81 (AQLL…VMFM), 92-112 (LWTV…VSLI), and 152-172 (FFLP…GAIT).

The protein belongs to the complex I subunit 6 family. In terms of assembly, NDH is composed of at least 16 different subunits, 5 of which are encoded in the nucleus.

The protein localises to the plastid. Its subcellular location is the chloroplast thylakoid membrane. The catalysed reaction is a plastoquinone + NADH + (n+1) H(+)(in) = a plastoquinol + NAD(+) + n H(+)(out). It carries out the reaction a plastoquinone + NADPH + (n+1) H(+)(in) = a plastoquinol + NADP(+) + n H(+)(out). Functionally, NDH shuttles electrons from NAD(P)H:plastoquinone, via FMN and iron-sulfur (Fe-S) centers, to quinones in the photosynthetic chain and possibly in a chloroplast respiratory chain. The immediate electron acceptor for the enzyme in this species is believed to be plastoquinone. Couples the redox reaction to proton translocation, and thus conserves the redox energy in a proton gradient. The chain is NAD(P)H-quinone oxidoreductase subunit 6, chloroplastic (ndhG) from Daucus carota (Wild carrot).